The sequence spans 466 residues: UDP-N-acetylmuramoylalanine--D-glutamate ligase (466 aa).

ATP is bound at residue 121–127; that stretch reads GTNGKST.

The protein belongs to the MurCDEF family.

Its subcellular location is the cytoplasm. The enzyme catalyses UDP-N-acetyl-alpha-D-muramoyl-L-alanine + D-glutamate + ATP = UDP-N-acetyl-alpha-D-muramoyl-L-alanyl-D-glutamate + ADP + phosphate + H(+). It functions in the pathway cell wall biogenesis; peptidoglycan biosynthesis. In terms of biological role, cell wall formation. Catalyzes the addition of glutamate to the nucleotide precursor UDP-N-acetylmuramoyl-L-alanine (UMA). In Bradyrhizobium diazoefficiens (strain JCM 10833 / BCRC 13528 / IAM 13628 / NBRC 14792 / USDA 110), this protein is UDP-N-acetylmuramoylalanine--D-glutamate ligase.